The primary structure comprises 314 residues: DNA-directed RNA polymerase subunit alpha (314 aa).

An alpha N-terminal domain (alpha-NTD) region spans residues 1 to 227 (MTKFEIECVE…ELLHPLKEIN (227 aa)). The alpha C-terminal domain (alpha-CTD) stretch occupies residues 241–314 (KINQILIEEL…LPKEKTVKPN (74 aa)).

The protein belongs to the RNA polymerase alpha chain family. As to quaternary structure, in plastids the minimal PEP RNA polymerase catalytic core is composed of four subunits: alpha, beta, beta', and beta''. When a (nuclear-encoded) sigma factor is associated with the core the holoenzyme is formed, which can initiate transcription.

It is found in the plastid. The protein localises to the chloroplast. The enzyme catalyses RNA(n) + a ribonucleoside 5'-triphosphate = RNA(n+1) + diphosphate. Its function is as follows. DNA-dependent RNA polymerase catalyzes the transcription of DNA into RNA using the four ribonucleoside triphosphates as substrates. This is DNA-directed RNA polymerase subunit alpha from Rhodomonas salina (Cryptomonas salina).